The sequence spans 141 residues: Large-conductance mechanosensitive channel (141 aa).

2 helical membrane-spanning segments follow: residues 16-36 (VIDL…VDSL) and 86-106 (GNFI…FLMV).

Belongs to the MscL family. As to quaternary structure, homopentamer.

It localises to the cell inner membrane. Its function is as follows. Channel that opens in response to stretch forces in the membrane lipid bilayer. May participate in the regulation of osmotic pressure changes within the cell. The sequence is that of Large-conductance mechanosensitive channel from Ralstonia nicotianae (strain ATCC BAA-1114 / GMI1000) (Ralstonia solanacearum).